The sequence spans 307 residues: Aspartate carbamoyltransferase catalytic subunit (307 aa).

Residues R54 and T55 each contribute to the carbamoyl phosphate site. Residue K83 coordinates L-aspartate. Residues R104, H132, and Q135 each contribute to the carbamoyl phosphate site. L-aspartate is bound by residues R165 and R228. Residues L267 and P268 each coordinate carbamoyl phosphate.

Belongs to the aspartate/ornithine carbamoyltransferase superfamily. ATCase family. In terms of assembly, heterododecamer (2C3:3R2) of six catalytic PyrB chains organized as two trimers (C3), and six regulatory PyrI chains organized as three dimers (R2).

The catalysed reaction is carbamoyl phosphate + L-aspartate = N-carbamoyl-L-aspartate + phosphate + H(+). It functions in the pathway pyrimidine metabolism; UMP biosynthesis via de novo pathway; (S)-dihydroorotate from bicarbonate: step 2/3. In terms of biological role, catalyzes the condensation of carbamoyl phosphate and aspartate to form carbamoyl aspartate and inorganic phosphate, the committed step in the de novo pyrimidine nucleotide biosynthesis pathway. In Clostridium botulinum (strain Eklund 17B / Type B), this protein is Aspartate carbamoyltransferase catalytic subunit.